Reading from the N-terminus, the 72-residue chain is ATP synthase subunit c (72 aa).

The next 2 helical transmembrane spans lie at 1 to 21 (MSLGVLAAAIAVGLGALGAGI) and 48 to 68 (MFIGVALVEALPIIGVVFSFI).

Belongs to the ATPase C chain family. F-type ATPases have 2 components, F(1) - the catalytic core - and F(0) - the membrane proton channel. F(1) has five subunits: alpha(3), beta(3), gamma(1), delta(1), epsilon(1). F(0) has three main subunits: a(1), b(2) and c(10-14). The alpha and beta chains form an alternating ring which encloses part of the gamma chain. F(1) is attached to F(0) by a central stalk formed by the gamma and epsilon chains, while a peripheral stalk is formed by the delta and b chains.

The protein localises to the cell membrane. In terms of biological role, f(1)F(0) ATP synthase produces ATP from ADP in the presence of a proton or sodium gradient. F-type ATPases consist of two structural domains, F(1) containing the extramembraneous catalytic core and F(0) containing the membrane proton channel, linked together by a central stalk and a peripheral stalk. During catalysis, ATP synthesis in the catalytic domain of F(1) is coupled via a rotary mechanism of the central stalk subunits to proton translocation. Functionally, key component of the F(0) channel; it plays a direct role in translocation across the membrane. A homomeric c-ring of between 10-14 subunits forms the central stalk rotor element with the F(1) delta and epsilon subunits. This Bacillus caldotenax protein is ATP synthase subunit c.